We begin with the raw amino-acid sequence, 154 residues long: Decarboxylase claH (154 aa).

Belongs to the tpcK family.

It catalyses the reaction atrochrysone carboxylate + H(+) = atrochrysone + CO2. It participates in pigment biosynthesis. Functionally, decarboxylase involved in the biosynthesis of the bianthraquinone cladofulvin, a conidial pigment not required for virulence but that plays a role in fitness and resistance to environmental stresses including UV light and low-temperature stress. The pathway begins with the synthesis of atrochrysone thioester by the polyketide synthase (PKS) claG. The atrochrysone carboxyl ACP thioesterase claF then breaks the thioester bond and releases the atrochrysone carboxylic acid from claG. This compound is decarboxylated by claH to yield emodin, which is further converted to chrysophanol hydroquinone by the reductase claC and the dehydratase claB. The cytochrome monooxygenase P450 claM then catalyzes the dimerization of nataloe-emodin to cladofulvin. The chain is Decarboxylase claH from Passalora fulva (Tomato leaf mold).